Consider the following 757-residue polypeptide: Xaa-Pro dipeptidyl-peptidase (757 aa).

Active-site charge relay system residues include serine 348, aspartate 468, and histidine 498.

Belongs to the peptidase S15 family. As to quaternary structure, homodimer.

The protein resides in the cytoplasm. The enzyme catalyses Hydrolyzes Xaa-Pro-|- bonds to release unblocked, N-terminal dipeptides from substrates including Ala-Pro-|-p-nitroanilide and (sequentially) Tyr-Pro-|-Phe-Pro-|-Gly-Pro-|-Ile.. Removes N-terminal dipeptides sequentially from polypeptides having unsubstituted N-termini provided that the penultimate residue is proline. This Streptococcus pneumoniae (strain ATCC 700669 / Spain 23F-1) protein is Xaa-Pro dipeptidyl-peptidase.